Reading from the N-terminus, the 442-residue chain is Trigger factor (442 aa).

Positions 163 to 248 (YDRVTINYCI…IIKIEKKQEL (86 aa)) constitute a PPIase FKBP-type domain.

Belongs to the FKBP-type PPIase family. Tig subfamily.

It is found in the cytoplasm. It carries out the reaction [protein]-peptidylproline (omega=180) = [protein]-peptidylproline (omega=0). Functionally, involved in protein export. Acts as a chaperone by maintaining the newly synthesized protein in an open conformation. Functions as a peptidyl-prolyl cis-trans isomerase. This chain is Trigger factor, found in Buchnera aphidicola subsp. Acyrthosiphon pisum (strain Tuc7).